The following is a 293-amino-acid chain: Bifunctional protein FolD (293 aa).

NADP(+) contacts are provided by residues 169 to 171 (GRG), threonine 196, and valine 237.

Belongs to the tetrahydrofolate dehydrogenase/cyclohydrolase family. In terms of assembly, homodimer.

It catalyses the reaction (6R)-5,10-methylene-5,6,7,8-tetrahydrofolate + NADP(+) = (6R)-5,10-methenyltetrahydrofolate + NADPH. The catalysed reaction is (6R)-5,10-methenyltetrahydrofolate + H2O = (6R)-10-formyltetrahydrofolate + H(+). Its pathway is one-carbon metabolism; tetrahydrofolate interconversion. In terms of biological role, catalyzes the oxidation of 5,10-methylenetetrahydrofolate to 5,10-methenyltetrahydrofolate and then the hydrolysis of 5,10-methenyltetrahydrofolate to 10-formyltetrahydrofolate. In Leifsonia xyli subsp. xyli (strain CTCB07), this protein is Bifunctional protein FolD.